The sequence spans 479 residues: Aspartyl/glutamyl-tRNA(Asn/Gln) amidotransferase subunit B (479 aa).

Belongs to the GatB/GatE family. GatB subfamily. As to quaternary structure, heterotrimer of A, B and C subunits.

The catalysed reaction is L-glutamyl-tRNA(Gln) + L-glutamine + ATP + H2O = L-glutaminyl-tRNA(Gln) + L-glutamate + ADP + phosphate + H(+). The enzyme catalyses L-aspartyl-tRNA(Asn) + L-glutamine + ATP + H2O = L-asparaginyl-tRNA(Asn) + L-glutamate + ADP + phosphate + 2 H(+). Allows the formation of correctly charged Asn-tRNA(Asn) or Gln-tRNA(Gln) through the transamidation of misacylated Asp-tRNA(Asn) or Glu-tRNA(Gln) in organisms which lack either or both of asparaginyl-tRNA or glutaminyl-tRNA synthetases. The reaction takes place in the presence of glutamine and ATP through an activated phospho-Asp-tRNA(Asn) or phospho-Glu-tRNA(Gln). The chain is Aspartyl/glutamyl-tRNA(Asn/Gln) amidotransferase subunit B from Streptococcus uberis (strain ATCC BAA-854 / 0140J).